A 123-amino-acid polypeptide reads, in one-letter code: Large ribosomal subunit protein bL12 (123 aa).

The protein belongs to the bacterial ribosomal protein bL12 family. Homodimer. Part of the ribosomal stalk of the 50S ribosomal subunit. Forms a multimeric L10(L12)X complex, where L10 forms an elongated spine to which 2 to 4 L12 dimers bind in a sequential fashion. Binds GTP-bound translation factors.

Its function is as follows. Forms part of the ribosomal stalk which helps the ribosome interact with GTP-bound translation factors. Is thus essential for accurate translation. This Hydrogenovibrio crunogenus (strain DSM 25203 / XCL-2) (Thiomicrospira crunogena) protein is Large ribosomal subunit protein bL12.